Here is a 427-residue protein sequence, read N- to C-terminus: MEKHGNYDIKKICVIGLGYIGLPTASMLANHGYEVVGVDVNEKRVNHIKNGELKIEEPGLLTLVKGAINSKNLNVQTSAEEADAFIICVPTPALENEDGSKKCDLTYVMSAVQAIIPFLKDGNLIVVESTIPPETTKKIYETINKKIYVAHCPERVLPGKILKELVENDRIIGGINKKSAEMAKEIYKSFVEGKIYITDSNTAEMVKLMENTYRDINIALANEFAKICDEIGVNVWDAIKIANKHPRVNILNPGPGVGGHCISIDPWFIVEKTNNAKFIRAARELNDNMPAYVCKSVLSELNKLGIEKPKISIFGATYKGNVEDTRESPSKNVIKMLLENGATVSTFDPHADCFEYPLSTLDECISGSDCIVVLTDHDAFKNIKKDDIDEICPKLKNKIVFDTKNILEHNLWKKAGFKVKLLGNGAW.

NAD(+) contacts are provided by Tyr19, Ile20, Asp39, Arg44, Thr91, and Thr130. Residues Arg155, Val156, Lys207, Asn211, Arg214, His245, Arg247, and Gly258 each coordinate UDP-N-acetyl-alpha-D-mannosaminouronate. Catalysis depends on Lys207, which acts as the Proton donor/acceptor. Cys261 serves as the catalytic Nucleophile. Positions 318 and 319 each coordinate UDP-N-acetyl-alpha-D-mannosaminouronate. Arg326 lines the NAD(+) pocket. UDP-N-acetyl-alpha-D-mannosaminouronate is bound at residue Lys404.

It belongs to the UDP-glucose/GDP-mannose dehydrogenase family. In terms of assembly, homotetramer; probably dimer of dimers.

The enzyme catalyses UDP-N-acetyl-alpha-D-mannosamine + 2 NAD(+) + H2O = UDP-N-acetyl-alpha-D-mannosaminouronate + 2 NADH + 3 H(+). Functionally, catalyzes the four-electron oxidation of UDP-N-acetyl-D-mannosamine (UDP-ManNAc), reducing NAD(+) and releasing UDP-N-acetylmannosaminuronic acid (UDP-ManNAcA). In Methanococcus maripaludis (strain C7 / ATCC BAA-1331), this protein is UDP-N-acetyl-D-mannosamine dehydrogenase (wecC).